Consider the following 636-residue polypeptide: DNA-dependent metalloprotease SPRTN (636 aa).

The tract at residues Gln19–Ser42 is disordered. A SprT-like domain is found at Arg76–His183. His141 serves as a coordination point for Zn(2+). Glu142 is a catalytic residue. Residues His145 and His160 each contribute to the Zn(2+) site. 2 disordered regions span residues Thr238–Arg382 and Arg398–Lys430. The segment covering Lys241–Lys268 has biased composition (basic and acidic residues). Residues Pro272–Ser281 show a composition bias toward low complexity. The SHP-box signature appears at Phe290–Gly298. A compositionally biased stretch (polar residues) spans Gln302–Ser311. Residues Pro313–Pro327 show a composition bias toward pro residues. Over residues Arg341–Gly374 the composition is skewed to polar residues. A compositionally biased stretch (low complexity) spans Gly399–Asp416. Residues Glu451–Phe458 carry the PIP-box motif. The tract at residues Thr473–Pro608 is disordered. Polar residues-rich tracts occupy residues Phe492–Ser523 and Ser545–Ser554. A Nuclear localization signal motif is present at residues Ser535–Ser566. 2 stretches are compositionally biased toward basic and acidic residues: residues Arg559–Phe570 and Thr584–Ser593. A UBZ4-type zinc finger spans residues Thr612 to Leu636. Cys615, Cys618, His630, and Cys634 together coordinate Zn(2+).

It belongs to the Spartan family. In terms of assembly, homodimer. Zn(2+) is required as a cofactor. In terms of processing, autocatalytically cleaved in response to double-stranded DNA-binding: autocatalytic cleavage takes place in trans and leads to inactivation.

The protein resides in the nucleus. Its subcellular location is the chromosome. With respect to regulation, DNA-binding activates the protease activity: single-stranded DNA-binding specifically activates ability to cleave covalent DNA-protein cross-links (DPCs). In contrast, double-stranded DNA-binding specifically activates autocatalytic cleavage, and subsequent inactivation. Functionally, DNA-dependent metalloendopeptidase that mediates the proteolytic cleavage of covalent DNA-protein cross-links (DPCs) during DNA synthesis, thereby playing a key role in maintaining genomic integrity. DPCs are highly toxic DNA lesions that interfere with essential chromatin transactions, such as replication and transcription, and which are induced by reactive agents, such as UV light or formaldehyde. Associates with the DNA replication machinery and specifically removes DPCs during DNA synthesis. Catalyzes proteolytic cleavage of the hmces DNA-protein cross-link following unfolding by the brip1/fancj helicase. Acts as a pleiotropic protease for DNA-binding proteins cross-linked with DNA, such as top1, top2a, histones H3 and H4. Mediates degradation of DPCs that are not ubiquitinated, while it is not able to degrade ubiquitinated DPCs. SPRTN activation requires polymerase collision with DPCs followed by helicase bypass of DPCs. May also act as a 'reader' of ubiquitinated pcna: facilitates chromatin association of rad18 and is required for efficient pcna monoubiquitination, promoting a feed-forward loop to enhance pcna ubiquitination and translesion DNA synthesis. Acts as a regulator of translesion DNA synthesis by recruiting vcp/p97 to sites of DNA damage. This chain is DNA-dependent metalloprotease SPRTN, found in Danio rerio (Zebrafish).